The primary structure comprises 524 residues: Na(+)/H(+) antiporter NhaB (524 aa).

The next 9 helical transmembrane spans lie at Phe13–Pro33, Leu98–Phe118, Ala140–Val160, Phe239–Leu259, Ala304–Val324, Gly325–Gly345, Leu358–Ile378, Ala448–Ile468, and Ala479–Val499.

This sequence belongs to the NhaB Na(+)/H(+) (TC 2.A.34) antiporter family.

The protein resides in the cell inner membrane. It catalyses the reaction 2 Na(+)(in) + 3 H(+)(out) = 2 Na(+)(out) + 3 H(+)(in). Na(+)/H(+) antiporter that extrudes sodium in exchange for external protons. This Yersinia pseudotuberculosis serotype O:3 (strain YPIII) protein is Na(+)/H(+) antiporter NhaB.